Reading from the N-terminus, the 607-residue chain is Aspartate--tRNA(Asp/Asn) ligase (607 aa).

L-aspartate is bound at residue Glu173. The aspartate stretch occupies residues 197–200 (QLFK). Arg219 is a binding site for L-aspartate. ATP contacts are provided by residues 219–221 (RDE) and Gln228. Residue His456 coordinates L-aspartate. Glu498 is an ATP binding site. Residue Arg505 coordinates L-aspartate. 550–553 (GLDR) is an ATP binding site.

Belongs to the class-II aminoacyl-tRNA synthetase family. Type 1 subfamily. In terms of assembly, homodimer.

The protein localises to the cytoplasm. It carries out the reaction tRNA(Asx) + L-aspartate + ATP = L-aspartyl-tRNA(Asx) + AMP + diphosphate. In terms of biological role, aspartyl-tRNA synthetase with relaxed tRNA specificity since it is able to aspartylate not only its cognate tRNA(Asp) but also tRNA(Asn). Reaction proceeds in two steps: L-aspartate is first activated by ATP to form Asp-AMP and then transferred to the acceptor end of tRNA(Asp/Asn). The sequence is that of Aspartate--tRNA(Asp/Asn) ligase from Magnetococcus marinus (strain ATCC BAA-1437 / JCM 17883 / MC-1).